Reading from the N-terminus, the 90-residue chain is uncharacterized protein (90 aa).

The N-terminal stretch at Met1–Ala20 is a signal peptide. Residues Gln31–Pro50 form a disordered region.

Its subcellular location is the secreted. This is an uncharacterized protein from Rattus norvegicus (Rat).